Consider the following 247-residue polypeptide: E3 SUMO-protein ligase NSE2 (247 aa).

M1 carries the post-translational modification N-acetylmethionine. Residues K90 and K107 each participate in a glycyl lysine isopeptide (Lys-Gly) (interchain with G-Cter in SUMO2) cross-link. At S116 the chain carries Phosphoserine. Glycyl lysine isopeptide (Lys-Gly) (interchain with G-Cter in SUMO2) cross-links involve residues K125 and K130. The segment at 154–240 adopts an SP-RING-type zinc-finger fold; that stretch reads MDEDMIVTQS…LRRAIESHNK (87 aa). Residues C185, H187, C210, and C215 each coordinate Zn(2+).

The protein belongs to the NSE2 family. In terms of assembly, component of the SMC5-SMC6 complex which consists at least of SMC5, SMC6, NSMCE2, NSMCE1, NSMCE4A or EID3 and NSMCE3. In terms of processing, sumoylated, possibly via autosumoylation.

It localises to the nucleus. It is found in the chromosome. Its subcellular location is the telomere. The protein localises to the PML body. It participates in protein modification; protein sumoylation. In terms of biological role, E3 SUMO-protein ligase component of the SMC5-SMC6 complex, a complex involved in DNA double-strand break repair by homologous recombination. Is not be required for the stability of the complex. The complex may promote sister chromatid homologous recombination by recruiting the SMC1-SMC3 cohesin complex to double-strand breaks. Acts as an E3 ligase mediating SUMO attachment to various proteins such as SMC6L1 and TSNAX, the shelterin complex subunits TERF1, TERF2, TINF2 and TERF2IP, RAD51AP1, and maybe the cohesin components RAD21 and STAG2. Required for recruitment of telomeres to PML nuclear bodies. Required for sister chromatid cohesion during prometaphase and mitotic progression. The polypeptide is E3 SUMO-protein ligase NSE2 (Nsmce2) (Rattus norvegicus (Rat)).